Consider the following 402-residue polypeptide: Deoxyguanosinetriphosphate triphosphohydrolase-like protein 2 (402 aa).

One can recognise an HD domain in the interval 72 to 215 (RLTHSLEVAQ…MDLADEIAYA (144 aa)).

Belongs to the dGTPase family. Type 2 subfamily.

The chain is Deoxyguanosinetriphosphate triphosphohydrolase-like protein 2 from Vibrio cholerae serotype O1 (strain ATCC 39315 / El Tor Inaba N16961).